The chain runs to 449 residues: Serine--tRNA ligase (449 aa).

255–257 (TSE) is an L-serine binding site. Residue 286 to 288 (RSE) coordinates ATP. Glu309 provides a ligand contact to L-serine. An ATP-binding site is contributed by 373 to 376 (EISS). Ser409 is an L-serine binding site.

The protein belongs to the class-II aminoacyl-tRNA synthetase family. Type-1 seryl-tRNA synthetase subfamily. In terms of assembly, homodimer. The tRNA molecule binds across the dimer.

Its subcellular location is the cytoplasm. The catalysed reaction is tRNA(Ser) + L-serine + ATP = L-seryl-tRNA(Ser) + AMP + diphosphate + H(+). The enzyme catalyses tRNA(Sec) + L-serine + ATP = L-seryl-tRNA(Sec) + AMP + diphosphate + H(+). Its pathway is aminoacyl-tRNA biosynthesis; selenocysteinyl-tRNA(Sec) biosynthesis; L-seryl-tRNA(Sec) from L-serine and tRNA(Sec): step 1/1. Catalyzes the attachment of serine to tRNA(Ser). Is also able to aminoacylate tRNA(Sec) with serine, to form the misacylated tRNA L-seryl-tRNA(Sec), which will be further converted into selenocysteinyl-tRNA(Sec). The polypeptide is Serine--tRNA ligase (Bordetella avium (strain 197N)).